The sequence spans 357 residues: Ion-translocating oxidoreductase complex subunit D (357 aa).

The next 3 helical transmembrane spans lie at 35-55 (VWLY…TVLV), 88-108 (LPPW…VVLG), and 119-139 (LFNP…VEMT). An FMN phosphoryl threonine modification is found at Thr-176. 5 helical membrane passes run 209–229 (APGS…VYLI), 233–253 (VIAW…ATVF), 261–281 (YADA…FFIA), 295–315 (AVFA…GGYP), and 316–336 (EATA…DHWI).

This sequence belongs to the NqrB/RnfD family. As to quaternary structure, the complex is composed of six subunits: RnfA, RnfB, RnfC, RnfD, RnfE and RnfG. FMN is required as a cofactor.

Its subcellular location is the cell inner membrane. Part of a membrane-bound complex that couples electron transfer with translocation of ions across the membrane. The protein is Ion-translocating oxidoreductase complex subunit D of Halorhodospira halophila (strain DSM 244 / SL1) (Ectothiorhodospira halophila (strain DSM 244 / SL1)).